The sequence spans 121 residues: DNA-directed RNA polymerase subunit omega (121 aa).

This sequence belongs to the RNA polymerase subunit omega family. In terms of assembly, the RNAP catalytic core consists of 2 alpha, 1 beta, 1 beta' and 1 omega subunit. When a sigma factor is associated with the core the holoenzyme is formed, which can initiate transcription.

It catalyses the reaction RNA(n) + a ribonucleoside 5'-triphosphate = RNA(n+1) + diphosphate. Its function is as follows. Promotes RNA polymerase assembly. Latches the N- and C-terminal regions of the beta' subunit thereby facilitating its interaction with the beta and alpha subunits. This is DNA-directed RNA polymerase subunit omega from Syntrophobacter fumaroxidans (strain DSM 10017 / MPOB).